Consider the following 700-residue polypeptide: Glutamine synthetase (700 aa).

A GS beta-grasp domain is found at 65-155; the sequence is YHFTPPGSSP…LPTAFCSYGG (91 aa). In terms of domain architecture, GS catalytic spans 159–589; it reads DRDSLLRSME…TMQEMIRKDL (431 aa). Positions 196, 198, 267, and 274 each coordinate Mg(2+). L-glutamate-binding positions include 318–319 and glycine 319; that span reads NG. Mg(2+) is bound at residue histidine 323. ATP-binding residues include serine 327 and arginine 435. Arginine 435 lines the L-glutamate pocket. Glutamate 472 contacts Mg(2+).

It belongs to the glutamine synthetase family. In terms of assembly, homohexamer. The cofactor is Mg(2+).

It is found in the cytoplasm. The catalysed reaction is L-glutamate + NH4(+) + ATP = L-glutamine + ADP + phosphate + H(+). The activity of this enzyme is not controlled by adenylation. Its function is as follows. Catalyzes the ATP-dependent biosynthesis of glutamine from glutamate and ammonia. The chain is Glutamine synthetase from Butyrivibrio fibrisolvens.